Consider the following 131-residue polypeptide: Large ribosomal subunit protein bL17 (131 aa).

Belongs to the bacterial ribosomal protein bL17 family. As to quaternary structure, part of the 50S ribosomal subunit. Contacts protein L32.

The protein is Large ribosomal subunit protein bL17 of Finegoldia magna (strain ATCC 29328 / DSM 20472 / WAL 2508) (Peptostreptococcus magnus).